A 1304-amino-acid polypeptide reads, in one-letter code: Probable inactive serine/threonine-protein kinase fnkC (1304 aa).

In terms of domain architecture, Protein kinase spans Phe33 to Ile402. Residues Leu39–Thr47 and Lys68 contribute to the ATP site. The segment at Lys208–Glu277 is disordered. Over residues Asn210–Ala269 the composition is skewed to low complexity. 5 FNIP repeats span residues His514–Asp556, Phe710–Cys753, Phe754–Gln797, Tyr798–Ser841, and Tyr900–Asp943. 2 MATH domains span residues Gln1025–Ala1154 and Asn1172–Ile1291.

The protein belongs to the protein kinase superfamily. STE Ser/Thr protein kinase family.

The polypeptide is Probable inactive serine/threonine-protein kinase fnkC (fnkC) (Dictyostelium discoideum (Social amoeba)).